Here is a 389-residue protein sequence, read N- to C-terminus: Phospho-N-acetylmuramoyl-pentapeptide-transferase (389 aa).

Helical transmembrane passes span 25-45 (RAVM…PWVI), 74-94 (MGGV…CDWG), 97-117 (FIWV…VDDY), 134-154 (FFWQ…SVSE), 190-210 (ISYP…IVGS), 222-242 (GLVI…AYVM), 259-279 (AGEL…FLWF), 286-306 (VFMG…VAVI), 311-331 (IVLF…MAQV), and 366-386 (QVTV…LSTL).

It belongs to the glycosyltransferase 4 family. MraY subfamily. Mg(2+) serves as cofactor.

The protein localises to the cell inner membrane. The enzyme catalyses UDP-N-acetyl-alpha-D-muramoyl-L-alanyl-gamma-D-glutamyl-meso-2,6-diaminopimeloyl-D-alanyl-D-alanine + di-trans,octa-cis-undecaprenyl phosphate = di-trans,octa-cis-undecaprenyl diphospho-N-acetyl-alpha-D-muramoyl-L-alanyl-D-glutamyl-meso-2,6-diaminopimeloyl-D-alanyl-D-alanine + UMP. It functions in the pathway cell wall biogenesis; peptidoglycan biosynthesis. Functionally, catalyzes the initial step of the lipid cycle reactions in the biosynthesis of the cell wall peptidoglycan: transfers peptidoglycan precursor phospho-MurNAc-pentapeptide from UDP-MurNAc-pentapeptide onto the lipid carrier undecaprenyl phosphate, yielding undecaprenyl-pyrophosphoryl-MurNAc-pentapeptide, known as lipid I. This Cupriavidus necator (strain ATCC 17699 / DSM 428 / KCTC 22496 / NCIMB 10442 / H16 / Stanier 337) (Ralstonia eutropha) protein is Phospho-N-acetylmuramoyl-pentapeptide-transferase.